The following is a 294-amino-acid chain: Bifunctional protein FolD (294 aa).

Residues 166-168 (GRS), S191, and I232 contribute to the NADP(+) site.

Belongs to the tetrahydrofolate dehydrogenase/cyclohydrolase family. Homodimer.

The enzyme catalyses (6R)-5,10-methylene-5,6,7,8-tetrahydrofolate + NADP(+) = (6R)-5,10-methenyltetrahydrofolate + NADPH. It catalyses the reaction (6R)-5,10-methenyltetrahydrofolate + H2O = (6R)-10-formyltetrahydrofolate + H(+). The protein operates within one-carbon metabolism; tetrahydrofolate interconversion. In terms of biological role, catalyzes the oxidation of 5,10-methylenetetrahydrofolate to 5,10-methenyltetrahydrofolate and then the hydrolysis of 5,10-methenyltetrahydrofolate to 10-formyltetrahydrofolate. The chain is Bifunctional protein FolD from Nitrobacter winogradskyi (strain ATCC 25391 / DSM 10237 / CIP 104748 / NCIMB 11846 / Nb-255).